The following is a 399-amino-acid chain: Chorismate synthase (399 aa).

Positions 40 and 46 each coordinate NADP(+). FMN is bound by residues 135–137 (RAS), 256–257 (QA), Gly-301, 316–320 (KPIAT), and Arg-342.

This sequence belongs to the chorismate synthase family. Homotetramer. Requires FMNH2 as cofactor.

It catalyses the reaction 5-O-(1-carboxyvinyl)-3-phosphoshikimate = chorismate + phosphate. The protein operates within metabolic intermediate biosynthesis; chorismate biosynthesis; chorismate from D-erythrose 4-phosphate and phosphoenolpyruvate: step 7/7. Catalyzes the anti-1,4-elimination of the C-3 phosphate and the C-6 proR hydrogen from 5-enolpyruvylshikimate-3-phosphate (EPSP) to yield chorismate, which is the branch point compound that serves as the starting substrate for the three terminal pathways of aromatic amino acid biosynthesis. This reaction introduces a second double bond into the aromatic ring system. In Arthrobacter sp. (strain FB24), this protein is Chorismate synthase.